A 465-amino-acid chain; its full sequence is Methionine aminopeptidase 2-2 (465 aa).

Basic and acidic residues predominate over residues 1–13 (MGSKTPNDHRRGP). Positions 1-92 (MGSKTPNDHR…KKKTLLGGLQ (92 aa)) are disordered. Acidic residues predominate over residues 44–55 (GETEDGEDEDDD). Basic residues predominate over residues 71 to 86 (TKKKNKRKKNKKKKKT). Histidine 217 contacts substrate. Positions 238, 249, and 318 each coordinate a divalent metal cation. Residue histidine 326 coordinates substrate. 2 residues coordinate a divalent metal cation: glutamate 351 and glutamate 446.

Belongs to the peptidase M24A family. Methionine aminopeptidase eukaryotic type 2 subfamily. Requires Co(2+) as cofactor. The cofactor is Zn(2+). Mn(2+) serves as cofactor. Fe(2+) is required as a cofactor.

The protein resides in the cytoplasm. It carries out the reaction Release of N-terminal amino acids, preferentially methionine, from peptides and arylamides.. In terms of biological role, cotranslationally removes the N-terminal methionine from nascent proteins. The N-terminal methionine is often cleaved when the second residue in the primary sequence is small and uncharged (Met-Ala-, Cys, Gly, Pro, Ser, Thr, or Val). This Ajellomyces dermatitidis (strain ER-3 / ATCC MYA-2586) (Blastomyces dermatitidis) protein is Methionine aminopeptidase 2-2.